The primary structure comprises 133 residues: UPF0102 protein Plav_3586 (133 aa).

This sequence belongs to the UPF0102 family.

The polypeptide is UPF0102 protein Plav_3586 (Parvibaculum lavamentivorans (strain DS-1 / DSM 13023 / NCIMB 13966)).